The primary structure comprises 402 residues: Coiled-coil domain-containing protein 188 (402 aa).

Disordered stretches follow at residues 1 to 30 (MEGLKTLGPCGHPHPQCPPTPASSSHGGGL), 50 to 74 (HSVQSQRPFPVPGAGGSGPTVEGEA), and 108 to 131 (HPGSNQGAPRQGGSIGSGTRPCPC). Residues 154–189 (GLLGSAEQSFLQLEQENHSLKRQNQELREQLGALLG) adopt a coiled-coil conformation. Residues 347–363 (LLLGALLVWTAAYVYVV) traverse the membrane as a helical segment.

The protein localises to the membrane. The sequence is that of Coiled-coil domain-containing protein 188 from Homo sapiens (Human).